The sequence spans 177 residues: Nucleoside triphosphate/diphosphate phosphatase (177 aa).

Arginine 23 acts as the Proton donor in catalysis. Residues asparagine 87, aspartate 103, aspartate 105, aspartate 107, aspartate 120, and glutamate 123 each coordinate Mg(2+).

The protein belongs to the Ntdp family. Mg(2+) serves as cofactor.

It catalyses the reaction a ribonucleoside 5'-triphosphate + H2O = a ribonucleoside 5'-diphosphate + phosphate + H(+). The catalysed reaction is a ribonucleoside 5'-diphosphate + H2O = a ribonucleoside 5'-phosphate + phosphate + H(+). Its function is as follows. Has nucleoside phosphatase activity towards nucleoside triphosphates and nucleoside diphosphates. This Streptococcus thermophilus (strain ATCC BAA-491 / LMD-9) protein is Nucleoside triphosphate/diphosphate phosphatase.